The following is a 174-amino-acid chain: Methylated-DNA--protein-cysteine methyltransferase (174 aa).

Residue C144 is the Nucleophile; methyl group acceptor of the active site.

It belongs to the MGMT family.

It is found in the cytoplasm. The enzyme catalyses a 6-O-methyl-2'-deoxyguanosine in DNA + L-cysteinyl-[protein] = S-methyl-L-cysteinyl-[protein] + a 2'-deoxyguanosine in DNA. It catalyses the reaction a 4-O-methyl-thymidine in DNA + L-cysteinyl-[protein] = a thymidine in DNA + S-methyl-L-cysteinyl-[protein]. Its function is as follows. Involved in the cellular defense against the biological effects of O6-methylguanine (O6-MeG) and O4-methylthymine (O4-MeT) in DNA. Repairs the methylated nucleobase in DNA by stoichiometrically transferring the methyl group to a cysteine residue in the enzyme. This is a suicide reaction: the enzyme is irreversibly inactivated. This chain is Methylated-DNA--protein-cysteine methyltransferase, found in Pyrococcus furiosus (strain ATCC 43587 / DSM 3638 / JCM 8422 / Vc1).